Consider the following 469-residue polypeptide: MKKKVIDFIKENSMIKNGDKVLVALSGGPDSVCLLHILSELRELLHIEVYAAHVNHCLRGESALKDEAYVEELCKNLNIKCFVKRVDINKISEEQNISTEMAGREERYKFFEELKNEYSLDKIAIAHNANDQAETLIMRALRGTGIEGLVGIKPVRDGIFIRPILILRRKEIEEYCEINNLNPRIDETNLEEIYSRNKIRLKAIPFIEENFNPDIVATLNRLAYSCSKDVEFIQEEVEKRFPKLCIKENHSILIKEEAFNEKEALLTRIIKKALFEVSSKHNNFELKHIQDIIALKDKGTGKQINITNGVIALNEYGDIRIKLVDSKKAKENKVLNLENIKDELDKNQKVVIEDDILGNYELIVEDLKKGEKFSKDRFIKSFDYDKISNIDIRFRQNGDKIIPLGMKSSKKLKDIFINNKIPKEERDFIPLVLFNNEIAWIVGSNVSETFKVTNKTKKVIKITFKGKEN.

An ATP-binding site is contributed by 26 to 31 (SGGPDS).

This sequence belongs to the tRNA(Ile)-lysidine synthase family.

Its subcellular location is the cytoplasm. It carries out the reaction cytidine(34) in tRNA(Ile2) + L-lysine + ATP = lysidine(34) in tRNA(Ile2) + AMP + diphosphate + H(+). In terms of biological role, ligates lysine onto the cytidine present at position 34 of the AUA codon-specific tRNA(Ile) that contains the anticodon CAU, in an ATP-dependent manner. Cytidine is converted to lysidine, thus changing the amino acid specificity of the tRNA from methionine to isoleucine. The sequence is that of tRNA(Ile)-lysidine synthase from Clostridium perfringens (strain ATCC 13124 / DSM 756 / JCM 1290 / NCIMB 6125 / NCTC 8237 / Type A).